Consider the following 485-residue polypeptide: Glutamyl-tRNA(Gln) amidotransferase subunit A (485 aa).

Active-site charge relay system residues include K79 and S154. S178 acts as the Acyl-ester intermediate in catalysis.

It belongs to the amidase family. GatA subfamily. Heterotrimer of A, B and C subunits.

The enzyme catalyses L-glutamyl-tRNA(Gln) + L-glutamine + ATP + H2O = L-glutaminyl-tRNA(Gln) + L-glutamate + ADP + phosphate + H(+). Its function is as follows. Allows the formation of correctly charged Gln-tRNA(Gln) through the transamidation of misacylated Glu-tRNA(Gln) in organisms which lack glutaminyl-tRNA synthetase. The reaction takes place in the presence of glutamine and ATP through an activated gamma-phospho-Glu-tRNA(Gln). This chain is Glutamyl-tRNA(Gln) amidotransferase subunit A, found in Geobacillus stearothermophilus (Bacillus stearothermophilus).